Reading from the N-terminus, the 542-residue chain is La-related protein 7 homolog (542 aa).

Positions 112–239 (VAEELDIKES…KRRFPFNLEQ (128 aa)) constitute an HTH La-type RNA-binding domain. In terms of domain architecture, RRM spans 247 to 335 (RTLYIDFLPP…GSIRIITYKK (89 aa)). The xRRM domain occupies 374–542 (EIKQNCLIKI…KQNITQNYNK (169 aa)).

Belongs to the LARP7 family. Component of the telomerase holoenzyme complex, composed of the catalytic core (the catalytic subunit TERT, the telomerase RNA template component TER and TAP65/p65), which is associated with two heterotrimeric subcomplexes: (i) the replication protein A (RPA)-related subcomplex, composed of TEB1, RPA2/TEB2 and RPA3/TEB3 and (ii) the CST-like subcomplex, composed of TAP75/p75, TAP45/p45 and TAP19/p19. TEB1 and the CST-like subcomplex are tethered to the catalytic core by TAP50/p50.

It is found in the chromosome. It localises to the telomere. Its function is as follows. RNA-binding protein required for assembly of the holoenzyme telomerase ribonucleoprotein (RNP) complex. Telomerase is an essential ribonucleoprotein enzyme that copies new telomeric repeats onto chromosome ends by repetitively synthesizing the short telomere-repeat sequence 5'-TTGGGG-3' using an RNA template component TER. TAP65/p65 specifically binds telomerase RNA template TER and is required for biogenesis and placement of the TER stem-terminus element: TAP65/p65 first protects the 3'-end of TER from degradation and acts as a chaperone to correctly fold TER for protein binding; it then bends TER stem-loop IV to position it for interaction of stem-loop IV with catalytic TERT RNA-binding domain. This Tetrahymena thermophila (strain SB210) protein is La-related protein 7 homolog.